We begin with the raw amino-acid sequence, 158 residues long: 6,7-dimethyl-8-ribityllumazine synthase (158 aa).

5-amino-6-(D-ribitylamino)uracil contacts are provided by residues Phe23, 61–63, and 85–87; these read SFE and AVI. 90–91 serves as a coordination point for (2S)-2-hydroxy-3-oxobutyl phosphate; that stretch reads ET. His93 acts as the Proton donor in catalysis. Phe118 contacts 5-amino-6-(D-ribitylamino)uracil. Arg132 contacts (2S)-2-hydroxy-3-oxobutyl phosphate.

This sequence belongs to the DMRL synthase family.

It carries out the reaction (2S)-2-hydroxy-3-oxobutyl phosphate + 5-amino-6-(D-ribitylamino)uracil = 6,7-dimethyl-8-(1-D-ribityl)lumazine + phosphate + 2 H2O + H(+). Its pathway is cofactor biosynthesis; riboflavin biosynthesis; riboflavin from 2-hydroxy-3-oxobutyl phosphate and 5-amino-6-(D-ribitylamino)uracil: step 1/2. Functionally, catalyzes the formation of 6,7-dimethyl-8-ribityllumazine by condensation of 5-amino-6-(D-ribitylamino)uracil with 3,4-dihydroxy-2-butanone 4-phosphate. This is the penultimate step in the biosynthesis of riboflavin. In Prochlorococcus marinus subsp. pastoris (strain CCMP1986 / NIES-2087 / MED4), this protein is 6,7-dimethyl-8-ribityllumazine synthase.